The sequence spans 611 residues: Phosphomethylpyrimidine synthase (611 aa).

Residues Asn-218, Met-247, Tyr-276, His-312, 332–334 (SRG), 373–376 (DGLR), and Glu-412 each bind substrate. His-416 provides a ligand contact to Zn(2+). A substrate-binding site is contributed by Tyr-439. His-480 serves as a coordination point for Zn(2+). 3 residues coordinate [4Fe-4S] cluster: Cys-560, Cys-563, and Cys-568.

Belongs to the ThiC family. In terms of assembly, homodimer. It depends on [4Fe-4S] cluster as a cofactor.

It catalyses the reaction 5-amino-1-(5-phospho-beta-D-ribosyl)imidazole + S-adenosyl-L-methionine = 4-amino-2-methyl-5-(phosphooxymethyl)pyrimidine + CO + 5'-deoxyadenosine + formate + L-methionine + 3 H(+). It functions in the pathway cofactor biosynthesis; thiamine diphosphate biosynthesis. Catalyzes the synthesis of the hydroxymethylpyrimidine phosphate (HMP-P) moiety of thiamine from aminoimidazole ribotide (AIR) in a radical S-adenosyl-L-methionine (SAM)-dependent reaction. This Caulobacter sp. (strain K31) protein is Phosphomethylpyrimidine synthase.